The primary structure comprises 162 residues: Auracyanin-A (162 aa).

An N-terminal signal peptide occupies residues Met1–Ala22. Cys23 carries the N-palmitoyl cysteine lipid modification. Cys23 carries the S-diacylglycerol cysteine lipid modification. The Plastocyanin-like domain occupies Val42–Asn162. Cu cation is bound by residues His81, Cys146, His151, and Met155.

Monomer. Cu cation is required as a cofactor.

The protein localises to the cell membrane. Its function is as follows. Probably a soluble electron acceptor for the integral membrane protein electron transfer alternative complex III (ACIII). The chain is Auracyanin-A from Chloroflexus aurantiacus (strain ATCC 29366 / DSM 635 / J-10-fl).